The following is a 310-amino-acid chain: Aspartate carbamoyltransferase catalytic subunit (310 aa).

Positions 58 and 59 each coordinate carbamoyl phosphate. Lys-86 lines the L-aspartate pocket. Carbamoyl phosphate contacts are provided by Arg-108, His-136, and Gln-139. L-aspartate is bound by residues Arg-169 and Arg-224. The carbamoyl phosphate site is built by Gly-265 and Pro-266.

Belongs to the aspartate/ornithine carbamoyltransferase superfamily. ATCase family. In terms of assembly, heterododecamer (2C3:3R2) of six catalytic PyrB chains organized as two trimers (C3), and six regulatory PyrI chains organized as three dimers (R2).

It carries out the reaction carbamoyl phosphate + L-aspartate = N-carbamoyl-L-aspartate + phosphate + H(+). It participates in pyrimidine metabolism; UMP biosynthesis via de novo pathway; (S)-dihydroorotate from bicarbonate: step 2/3. Catalyzes the condensation of carbamoyl phosphate and aspartate to form carbamoyl aspartate and inorganic phosphate, the committed step in the de novo pyrimidine nucleotide biosynthesis pathway. The chain is Aspartate carbamoyltransferase catalytic subunit from Geobacter sp. (strain M21).